The chain runs to 237 residues: MRFSPSLEQGRLLRRYKRFLADIELASGEQMTIHCPNTGSMLNCMREGGQVWFSRSNDPKRKLPGTWEISETPQGRLACVNTGRANALVEEALRAGTITELVGFTALKREVAYGEEGSRIDFRLEFEGAPAYVEVKSVTLGYPDTAVAAFPDAVTQRGAKHLRELAKLARQGVRAVQLYCVNLTGIDAVRPAEEIDTAYAQALRAAVADGVEVLAYGTRLDAEGIVIDRRLPVLLTP.

Belongs to the SfsA family.

This Pseudomonas putida (strain ATCC 700007 / DSM 6899 / JCM 31910 / BCRC 17059 / LMG 24140 / F1) protein is Sugar fermentation stimulation protein homolog.